Here is a 186-residue protein sequence, read N- to C-terminus: MIKMRDIIREGNHTLRAEAKQVKFPLSEADQKLANDMMEYLENSQDPELAKKYGLRAGVGLAAPQVDVSEQMAAVLVPSENEDDEPVFKDVIINPVIISHSVQPGALTEGEGCLSVDRDIAGYVIRHDRITLRYYNMAGEEKKIRLKNYPAIVCQHEIDHLHGILFYDHINGDNPFAADDDLVLIS.

2 residues coordinate Fe cation: Cys113 and His156. Residue Glu157 is part of the active site. His160 contacts Fe cation.

This sequence belongs to the polypeptide deformylase family. Fe(2+) serves as cofactor.

The enzyme catalyses N-terminal N-formyl-L-methionyl-[peptide] + H2O = N-terminal L-methionyl-[peptide] + formate. Removes the formyl group from the N-terminal Met of newly synthesized proteins. Requires at least a dipeptide for an efficient rate of reaction. N-terminal L-methionine is a prerequisite for activity but the enzyme has broad specificity at other positions. The chain is Peptide deformylase from Lactiplantibacillus plantarum (strain ATCC BAA-793 / NCIMB 8826 / WCFS1) (Lactobacillus plantarum).